The sequence spans 232 residues: MSPVFLIMIPAGYLVGAIPMAYLLSRWRRGIDIRRYGSGNVGASNVIKTAGKKLGLAVFVFDVSKGAIIILLAGWLGLELWQQIVVGLLTIAGHNWPVFLRFNGGRGIATSLGVALVMAPVPALIALSTALTFGFFKKMAPGVFLGVGALPVMSGYFHGFFGVQEHQTVTWGFAGLFLIMIVRRLMAPDSEYSSTVSKAELVFNRMFLDRDIRSRSVWINRNTAAHKEGLGI.

Transmembrane regions (helical) follow at residues 4–24 (VFLI…AYLL), 54–76 (LGLA…AGWL), 80–99 (LWQQ…WPVF), 107–127 (GIAT…LIAL), 143–163 (VFLG…FFGV), and 168–188 (TVTW…LMAP).

The protein belongs to the PlsY family. As to quaternary structure, probably interacts with PlsX.

The protein localises to the cell membrane. The enzyme catalyses an acyl phosphate + sn-glycerol 3-phosphate = a 1-acyl-sn-glycero-3-phosphate + phosphate. The protein operates within lipid metabolism; phospholipid metabolism. Its function is as follows. Catalyzes the transfer of an acyl group from acyl-phosphate (acyl-PO(4)) to glycerol-3-phosphate (G3P) to form lysophosphatidic acid (LPA). This enzyme utilizes acyl-phosphate as fatty acyl donor, but not acyl-CoA or acyl-ACP. This chain is Glycerol-3-phosphate acyltransferase 4, found in Dehalococcoides mccartyi (strain CBDB1).